The sequence spans 114 residues: Ferritin-like protein (114 aa).

Residues glutamate 29, glutamate 59, and histidine 62 each contribute to the Fe cation site. The interval phenylalanine 86–leucine 114 is cargo-loading peptide. The disordered stretch occupies residues isoleucine 94–leucine 114. Positions glutamate 103–leucine 114 are enriched in gly residues.

The protein belongs to the ferritin-like superfamily. In terms of assembly, probably forms a decamer which binds to the pentameric axis of the interior of the protein shell; as the Flp cargo protein is flexible, packing into the shell is not rigid. 3, 4 or 5 cargo decamers bind inside the encapulin nanocompartment. Fe cation is required as a cofactor.

Its subcellular location is the encapsulin nanocompartment. In terms of biological role, cargo protein of a type 1 encapsulin nanocompartment. A ferritin-like protein that probably stores iron in the encapsulin nanocompartment. This is Ferritin-like protein from Thermotoga maritima (strain ATCC 43589 / DSM 3109 / JCM 10099 / NBRC 100826 / MSB8).